The chain runs to 320 residues: Dermonecrotic toxin LarSicTox-alphaIB2a (320 aa).

The signal sequence occupies residues 1–15 (MSHSSTALLHPYVAA). A propeptide spanning residues 16–41 (RATEKFAPIYFFCHPLQSAETDVAER) is cleaved from the precursor. Histidine 52 is a catalytic residue. 2 residues coordinate Mg(2+): glutamate 72 and aspartate 74. Catalysis depends on histidine 88, which acts as the Nucleophile. Intrachain disulfides connect cysteine 92/cysteine 98 and cysteine 94/cysteine 237. Aspartate 132 contacts Mg(2+). Residue asparagine 297 is glycosylated (N-linked (GlcNAc...) asparagine).

It belongs to the arthropod phospholipase D family. Class II subfamily. Mg(2+) serves as cofactor. In terms of tissue distribution, expressed by the venom gland.

It localises to the secreted. It catalyses the reaction an N-(acyl)-sphingosylphosphocholine = an N-(acyl)-sphingosyl-1,3-cyclic phosphate + choline. It carries out the reaction an N-(acyl)-sphingosylphosphoethanolamine = an N-(acyl)-sphingosyl-1,3-cyclic phosphate + ethanolamine. The enzyme catalyses a 1-acyl-sn-glycero-3-phosphocholine = a 1-acyl-sn-glycero-2,3-cyclic phosphate + choline. The catalysed reaction is a 1-acyl-sn-glycero-3-phosphoethanolamine = a 1-acyl-sn-glycero-2,3-cyclic phosphate + ethanolamine. Its function is as follows. Dermonecrotic toxins cleave the phosphodiester linkage between the phosphate and headgroup of certain phospholipids (sphingolipid and lysolipid substrates), forming an alcohol (often choline) and a cyclic phosphate. This toxin acts on sphingomyelin (SM). It may also act on ceramide phosphoethanolamine (CPE), lysophosphatidylcholine (LPC) and lysophosphatidylethanolamine (LPE), but not on lysophosphatidylserine (LPS), and lysophosphatidylglycerol (LPG). It acts by transphosphatidylation, releasing exclusively cyclic phosphate products as second products. Induces dermonecrosis, hemolysis, increased vascular permeability, edema, inflammatory response, and platelet aggregation. This Loxosceles arizonica (Arizona brown spider) protein is Dermonecrotic toxin LarSicTox-alphaIB2a.